Reading from the N-terminus, the 73-residue chain is Alternative prion protein (73 aa).

Residues 32 to 52 (WWWLGAASWWWLGAAPWWWLG) traverse the membrane as a helical segment.

Detected in brain homogenate, primary neurons, and peripheral blood mononuclear cells (at protein level).

It localises to the mitochondrion outer membrane. The polypeptide is Alternative prion protein (PRNP) (Homo sapiens (Human)).